The chain runs to 307 residues: Aspartate carbamoyltransferase catalytic subunit (307 aa).

Residues Arg-54 and Thr-55 each coordinate carbamoyl phosphate. Lys-83 lines the L-aspartate pocket. Residues Arg-104, His-132, and Gln-135 each coordinate carbamoyl phosphate. L-aspartate contacts are provided by Arg-165 and Arg-228. Residues Leu-267 and Pro-268 each coordinate carbamoyl phosphate.

This sequence belongs to the aspartate/ornithine carbamoyltransferase superfamily. ATCase family. As to quaternary structure, heterododecamer (2C3:3R2) of six catalytic PyrB chains organized as two trimers (C3), and six regulatory PyrI chains organized as three dimers (R2).

It catalyses the reaction carbamoyl phosphate + L-aspartate = N-carbamoyl-L-aspartate + phosphate + H(+). It functions in the pathway pyrimidine metabolism; UMP biosynthesis via de novo pathway; (S)-dihydroorotate from bicarbonate: step 2/3. In terms of biological role, catalyzes the condensation of carbamoyl phosphate and aspartate to form carbamoyl aspartate and inorganic phosphate, the committed step in the de novo pyrimidine nucleotide biosynthesis pathway. The chain is Aspartate carbamoyltransferase catalytic subunit from Clostridium acetobutylicum (strain ATCC 824 / DSM 792 / JCM 1419 / IAM 19013 / LMG 5710 / NBRC 13948 / NRRL B-527 / VKM B-1787 / 2291 / W).